The following is an 880-amino-acid chain: Alanine--tRNA ligase (880 aa).

His-567, His-571, Cys-669, and His-673 together coordinate Zn(2+).

It belongs to the class-II aminoacyl-tRNA synthetase family. The cofactor is Zn(2+).

It localises to the cytoplasm. It catalyses the reaction tRNA(Ala) + L-alanine + ATP = L-alanyl-tRNA(Ala) + AMP + diphosphate. Functionally, catalyzes the attachment of alanine to tRNA(Ala) in a two-step reaction: alanine is first activated by ATP to form Ala-AMP and then transferred to the acceptor end of tRNA(Ala). Also edits incorrectly charged Ser-tRNA(Ala) and Gly-tRNA(Ala) via its editing domain. This chain is Alanine--tRNA ligase, found in Bacillus thuringiensis subsp. konkukian (strain 97-27).